Consider the following 373-residue polypeptide: Opsin Rh1 (373 aa).

Residues 1–49 lie on the Extracellular side of the membrane; the sequence is MESFAVAAAQLGPHFAPLSNGSVVDKVTPDMAHLISPYWNQFPAMDPIW. Asn20 is a glycosylation site (N-linked (GlcNAc...) asparagine). The chain crosses the membrane as a helical span at residues 50–74; it reads AKILTAYMIMIGMISWCGNGVVIYI. The Cytoplasmic segment spans residues 75–86; the sequence is FATTKSLRTPAN. A helical transmembrane segment spans residues 87–112; the sequence is LLVINLAISDFGIMITNTPMMGINLY. Residues 113 to 126 are Extracellular-facing; that stretch reads FETWVLGPMMCDIY. Cys123 and Cys200 form a disulfide bridge. The helical transmembrane segment at 127 to 146 threads the bilayer; that stretch reads AGLGSAFGCSSIWSMCMISL. The Cytoplasmic portion of the chain corresponds to 147 to 165; the sequence is DRYQVIVKGMAGRPMTIPL. The helical transmembrane segment at 166-189 threads the bilayer; the sequence is ALGKIAYIWFMSSIWCLAPAFGWS. Over 190 to 213 the chain is Extracellular; the sequence is RYVPEGNLTSCGIDYLERDWNPRS. The N-linked (GlcNAc...) asparagine glycan is linked to Asn196. The chain crosses the membrane as a helical span at residues 214 to 241; the sequence is YLIFYSIFVYYIPLFLICYSYWFIIAAV. At 242 to 276 the chain is on the cytoplasmic side; that stretch reads SAHEKAMREQAKKMNVKSLRSSEDAEKSAEGKLAK. The chain crosses the membrane as a helical span at residues 277-300; sequence VALVTITLWFMAWTPYLVINCMGL. Residues 301–307 are Extracellular-facing; the sequence is FKFEGLT. The helical transmembrane segment at 308–332 threads the bilayer; that stretch reads PLNTIWGACFAKSAACYNPIVYGIS. Position 319 is an N6-(retinylidene)lysine (Lys319). The Cytoplasmic portion of the chain corresponds to 333 to 373; the sequence is HPKYRLALKEKCPCCVFGKVDDGKSSDAQSQATASEAESKA. The interval 354–373 is disordered; it reads DGKSSDAQSQATASEAESKA. A compositionally biased stretch (low complexity) spans 358–373; it reads SDAQSQATASEAESKA.

The protein belongs to the G-protein coupled receptor 1 family. Opsin subfamily. Phosphorylated on some or all of the serine and threonine residues present in the C-terminal region.

The protein localises to the cell projection. Its subcellular location is the rhabdomere membrane. Functionally, visual pigments are the light-absorbing molecules that mediate vision. They consist of an apoprotein, opsin, covalently linked to cis-retinal. The polypeptide is Opsin Rh1 (ninaE) (Drosophila melanogaster (Fruit fly)).